We begin with the raw amino-acid sequence, 651 residues long: Protein RcaC (651 aa).

The region spanning 2-116 is the Response regulatory 1 domain; it reads KILLVEDDDV…ELIARIRALL (115 aa). The residue at position 51 (D51) is a 4-aspartylphosphate. The segment at residues 124–223 is a DNA-binding region (ompR/PhoB-type); it reads FPLLTWGDLL…MHGRGYYLKA (100 aa). Response regulatory domains are found at residues 384 to 519 and 527 to 643; these read LLLM…VNLL and KVMI…LRRL.

Functionally, required for chromatic adaptation. Thought to be a positive regulator of phycobiliproteins. This Microchaete diplosiphon (Fremyella diplosiphon) protein is Protein RcaC (rcaC).